We begin with the raw amino-acid sequence, 669 residues long: Matrix metalloproteinase-15 (669 aa).

Positions 1 to 41 (MGSDPSAPGRPGWTGSLLGDREEAARPRLLPLLLVLLGCLG) form a signal peptide, or 45. A propeptide spanning residues 42–131 (LGVAAEDAEV…KANLRRRRKR (90 aa)) is cleaved from the precursor. Positions 109–116 (PRCGVPDQ) match the Cysteine switch motif. Cys-111 provides a ligand contact to Zn(2+). At 132 to 625 (YALTGRKWNN…QMEEVARTVN (494 aa)) the chain is on the extracellular side. Residue Asn-150 is glycosylated (N-linked (GlcNAc...) asparagine). Position 259 (His-259) interacts with Zn(2+). Residue Glu-260 is part of the active site. Zn(2+) contacts are provided by His-263 and His-269. The disordered stretch occupies residues 300-370 (QQLYGTPDGQ…RPDQYGPNIC (71 aa)). The segment covering 305 to 322 (TPDGQPQPTQPLPTVTPR) has biased composition (low complexity). Positions 333–342 (RPPQPPPPGG) are enriched in pro residues. Hemopexin repeat units lie at residues 367-415 (PNIC…WRGL), 416-461 (PGDI…GLGI), 463-511 (YDRI…QGIP), and 512-559 (ASPK…FMGC). Cys-370 and Cys-559 are disulfide-bonded. Residues 574–593 (RPPFNPHGGAEPGADSAEGD) are disordered. Ser-589 bears the Phosphoserine mark. A helical membrane pass occupies residues 626-646 (VVMVLVPLLLLLCVLGLTYAL). Residues 647–669 (VQMQRKGAPRVLLYCKRSLQEWV) are Cytoplasmic-facing.

This sequence belongs to the peptidase M10A family. It depends on Zn(2+) as a cofactor. Ca(2+) serves as cofactor. In terms of processing, the precursor is cleaved by a furin endopeptidase. Appeared to be synthesized preferentially in liver, placenta, testis, colon and intestine. Substantial amounts are also detected in pancreas, kidney, lung, heart and skeletal muscle.

The protein localises to the membrane. Endopeptidase that degrades various components of the extracellular matrix. May activate progelatinase A. The protein is Matrix metalloproteinase-15 (MMP15) of Homo sapiens (Human).